The sequence spans 361 residues: Protein RecA (361 aa).

Residue 77–84 (GPESSGKT) coordinates ATP.

The protein belongs to the RecA family.

Its subcellular location is the cytoplasm. In terms of biological role, can catalyze the hydrolysis of ATP in the presence of single-stranded DNA, the ATP-dependent uptake of single-stranded DNA by duplex DNA, and the ATP-dependent hybridization of homologous single-stranded DNAs. It interacts with LexA causing its activation and leading to its autocatalytic cleavage. This chain is Protein RecA, found in Brucella anthropi (strain ATCC 49188 / DSM 6882 / CCUG 24695 / JCM 21032 / LMG 3331 / NBRC 15819 / NCTC 12168 / Alc 37) (Ochrobactrum anthropi).